We begin with the raw amino-acid sequence, 252 residues long: tRNA (guanine-N(1)-)-methyltransferase (252 aa).

S-adenosyl-L-methionine contacts are provided by residues Gly118 and 138 to 143; that span reads IGDYVL.

The protein belongs to the RNA methyltransferase TrmD family. Homodimer.

The protein resides in the cytoplasm. It carries out the reaction guanosine(37) in tRNA + S-adenosyl-L-methionine = N(1)-methylguanosine(37) in tRNA + S-adenosyl-L-homocysteine + H(+). Functionally, specifically methylates guanosine-37 in various tRNAs. The polypeptide is tRNA (guanine-N(1)-)-methyltransferase (Pseudomonas aeruginosa (strain UCBPP-PA14)).